Here is a 352-residue protein sequence, read N- to C-terminus: Protein RecA (352 aa).

An ATP-binding site is contributed by 67–74 (GPESSGKT).

The protein belongs to the RecA family.

The protein resides in the cytoplasm. Can catalyze the hydrolysis of ATP in the presence of single-stranded DNA, the ATP-dependent uptake of single-stranded DNA by duplex DNA, and the ATP-dependent hybridization of homologous single-stranded DNAs. It interacts with LexA causing its activation and leading to its autocatalytic cleavage. This Chlamydia trachomatis serovar A (strain ATCC VR-571B / DSM 19440 / HAR-13) protein is Protein RecA.